Here is a 181-residue protein sequence, read N- to C-terminus: Proteinase inhibitor B (181 aa).

A signal peptide spans 1-24 (MAASNALLLISGALLISLAVLCQG). 3 disulfide bridges follow: C67-C113, C134-C143, and C136-C139.

It belongs to the protease inhibitor I3 (leguminous Kunitz-type inhibitor) family.

Its subcellular location is the secreted. Possesses two reactive sites. Inhibits two molecules of trypsin simultaneously. Inhibits efficiently kallikrein, but chymotrypsin weakly. This chain is Proteinase inhibitor B, found in Sagittaria sagittifolia (Arrowhead).